The following is a 370-amino-acid chain: Spermidine/putrescine import ATP-binding protein PotA (370 aa).

Residues 6–236 (IELHQVTKRY…PINHFVADFI (231 aa)) form the ABC transporter domain. 38–45 (GPSGCGKT) contacts ATP.

The protein belongs to the ABC transporter superfamily. Spermidine/putrescine importer (TC 3.A.1.11.1) family. As to quaternary structure, the complex is composed of two ATP-binding proteins (PotA), two transmembrane proteins (PotB and PotC) and a solute-binding protein (PotD).

It localises to the cell membrane. It catalyses the reaction ATP + H2O + polyamine-[polyamine-binding protein]Side 1 = ADP + phosphate + polyamineSide 2 + [polyamine-binding protein]Side 1.. Functionally, part of the ABC transporter complex PotABCD involved in spermidine/putrescine import. Responsible for energy coupling to the transport system. The chain is Spermidine/putrescine import ATP-binding protein PotA from Levilactobacillus brevis (strain ATCC 367 / BCRC 12310 / CIP 105137 / JCM 1170 / LMG 11437 / NCIMB 947 / NCTC 947) (Lactobacillus brevis).